Consider the following 645-residue polypeptide: Acetyl-coenzyme A synthetase (645 aa).

CoA contacts are provided by residues 190 to 193 (RGGR), T309, and N333. Residues 385-387 (GEP), 409-414 (DTWWQT), D498, and R513 contribute to the ATP site. CoA is bound at residue S521. R524 is a binding site for ATP. Residues V535, H537, and V540 each coordinate Mg(2+). R582 provides a ligand contact to CoA. N6-acetyllysine is present on K607.

It belongs to the ATP-dependent AMP-binding enzyme family. Mg(2+) serves as cofactor. In terms of processing, acetylated. Deacetylation by the SIR2-homolog deacetylase activates the enzyme.

The enzyme catalyses acetate + ATP + CoA = acetyl-CoA + AMP + diphosphate. Catalyzes the conversion of acetate into acetyl-CoA (AcCoA), an essential intermediate at the junction of anabolic and catabolic pathways. AcsA undergoes a two-step reaction. In the first half reaction, AcsA combines acetate with ATP to form acetyl-adenylate (AcAMP) intermediate. In the second half reaction, it can then transfer the acetyl group from AcAMP to the sulfhydryl group of CoA, forming the product AcCoA. The sequence is that of Acetyl-coenzyme A synthetase from Beijerinckia indica subsp. indica (strain ATCC 9039 / DSM 1715 / NCIMB 8712).